A 156-amino-acid chain; its full sequence is Small ribosomal subunit protein uS7 (156 aa).

It belongs to the universal ribosomal protein uS7 family. As to quaternary structure, part of the 30S ribosomal subunit. Contacts proteins S9 and S11.

Its function is as follows. One of the primary rRNA binding proteins, it binds directly to 16S rRNA where it nucleates assembly of the head domain of the 30S subunit. Is located at the subunit interface close to the decoding center, probably blocks exit of the E-site tRNA. This is Small ribosomal subunit protein uS7 from Rhodopseudomonas palustris (strain BisA53).